A 321-amino-acid chain; its full sequence is ATP-dependent 6-phosphofructokinase (321 aa).

G12 contributes to the ATP binding site. 22–26 (RGVVR) serves as a coordination point for ADP. Residues 73-74 (RF) and 103-106 (GDGS) each bind ATP. D104 contacts Mg(2+). Residue 127–129 (TID) coordinates substrate. D129 acts as the Proton acceptor in catalysis. Residue R156 participates in ADP binding. Substrate is bound by residues R164 and 171–173 (MGR). ADP is bound by residues 187 to 189 (GCE), K213, and 215 to 217 (KRH). Residues E224, R245, and 251–254 (HTQR) each bind substrate.

The protein belongs to the phosphofructokinase type A (PFKA) family. ATP-dependent PFK group I subfamily. Prokaryotic clade 'B1' sub-subfamily. Homotetramer. Mg(2+) is required as a cofactor.

The protein localises to the cytoplasm. It carries out the reaction beta-D-fructose 6-phosphate + ATP = beta-D-fructose 1,6-bisphosphate + ADP + H(+). Its pathway is carbohydrate degradation; glycolysis; D-glyceraldehyde 3-phosphate and glycerone phosphate from D-glucose: step 3/4. Its activity is regulated as follows. Allosterically activated by ADP and other diphosphonucleosides, and allosterically inhibited by phosphoenolpyruvate. Its function is as follows. Catalyzes the phosphorylation of D-fructose 6-phosphate to fructose 1,6-bisphosphate by ATP, the first committing step of glycolysis. The sequence is that of ATP-dependent 6-phosphofructokinase from Glaesserella parasuis serovar 5 (strain SH0165) (Haemophilus parasuis).